The following is a 392-amino-acid chain: Formate-dependent phosphoribosylglycinamide formyltransferase (392 aa).

Residues 22–23 and glutamate 82 contribute to the N(1)-(5-phospho-beta-D-ribosyl)glycinamide site; that span reads EL. Residues arginine 114, lysine 155, 160–165, 195–198, and glutamate 203 contribute to the ATP site; these read SSGKGQ and EGVV. One can recognise an ATP-grasp domain in the interval 119–308; sequence RLAAEELGLP…EFALHVRAFL (190 aa). The Mg(2+) site is built by glutamate 267 and glutamate 279. Residues aspartate 286, lysine 355, and 362 to 363 each bind N(1)-(5-phospho-beta-D-ribosyl)glycinamide; that span reads RR.

Belongs to the PurK/PurT family. Homodimer.

It carries out the reaction N(1)-(5-phospho-beta-D-ribosyl)glycinamide + formate + ATP = N(2)-formyl-N(1)-(5-phospho-beta-D-ribosyl)glycinamide + ADP + phosphate + H(+). Its pathway is purine metabolism; IMP biosynthesis via de novo pathway; N(2)-formyl-N(1)-(5-phospho-D-ribosyl)glycinamide from N(1)-(5-phospho-D-ribosyl)glycinamide (formate route): step 1/1. Functionally, involved in the de novo purine biosynthesis. Catalyzes the transfer of formate to 5-phospho-ribosyl-glycinamide (GAR), producing 5-phospho-ribosyl-N-formylglycinamide (FGAR). Formate is provided by PurU via hydrolysis of 10-formyl-tetrahydrofolate. The sequence is that of Formate-dependent phosphoribosylglycinamide formyltransferase from Salmonella paratyphi B (strain ATCC BAA-1250 / SPB7).